A 700-amino-acid chain; its full sequence is Polyribonucleotide nucleotidyltransferase (700 aa).

2 residues coordinate Mg(2+): Asp-485 and Asp-491. The KH domain occupies 552-611; that stretch reads PRITVIKINPEKIRDVIGKGGAVIRALTEETGTTIELEDDGTVKIASSNGEATKEAIRRI. An S1 motif domain is found at 621–689; sequence GRIYNGKVIR…RQGRVRLSIK (69 aa).

Belongs to the polyribonucleotide nucleotidyltransferase family. In terms of assembly, component of the RNA degradosome, which is a multiprotein complex involved in RNA processing and mRNA degradation. Mg(2+) serves as cofactor.

It localises to the cytoplasm. It carries out the reaction RNA(n+1) + phosphate = RNA(n) + a ribonucleoside 5'-diphosphate. Involved in mRNA degradation. Catalyzes the phosphorolysis of single-stranded polyribonucleotides processively in the 3'- to 5'-direction. This Shewanella baltica (strain OS155 / ATCC BAA-1091) protein is Polyribonucleotide nucleotidyltransferase.